Consider the following 250-residue polypeptide: Acetylglutamate kinase (250 aa).

Substrate is bound by residues Gly41–Gly42, Arg63, and Asn156.

It belongs to the acetylglutamate kinase family. ArgB subfamily.

The protein localises to the cytoplasm. It carries out the reaction N-acetyl-L-glutamate + ATP = N-acetyl-L-glutamyl 5-phosphate + ADP. The protein operates within amino-acid biosynthesis; L-arginine biosynthesis; N(2)-acetyl-L-ornithine from L-glutamate: step 2/4. Catalyzes the ATP-dependent phosphorylation of N-acetyl-L-glutamate. This Listeria monocytogenes serovar 1/2a (strain ATCC BAA-679 / EGD-e) protein is Acetylglutamate kinase.